Consider the following 130-residue polypeptide: MAAQKRKTTKRRVRKNIPSGIAHIHTTFNNTIVTITDPAGNAISWSSAGALGIKGSRKSTPFAAQLTSEAAAKGAMDNGMARVEVYVKGPGPGREAAIRSLQAAGLEITAIKDVTPVPHNGCRPPKRPRN.

This sequence belongs to the universal ribosomal protein uS11 family. In terms of assembly, part of the 30S ribosomal subunit. Interacts with proteins S7 and S18. Binds to IF-3.

Its function is as follows. Located on the platform of the 30S subunit, it bridges several disparate RNA helices of the 16S rRNA. Forms part of the Shine-Dalgarno cleft in the 70S ribosome. This Acholeplasma laidlawii (strain PG-8A) protein is Small ribosomal subunit protein uS11.